Reading from the N-terminus, the 332-residue chain is Fructose-1,6-bisphosphatase class 1 (332 aa).

Glu-89, Asp-110, Leu-112, and Asp-113 together coordinate Mg(2+). Substrate is bound by residues 113–116 (DGSS), Asn-206, Tyr-239, 257–259 (YLY), and Lys-269. Glu-275 is a binding site for Mg(2+).

It belongs to the FBPase class 1 family. In terms of assembly, homotetramer. Requires Mg(2+) as cofactor.

Its subcellular location is the cytoplasm. It catalyses the reaction beta-D-fructose 1,6-bisphosphate + H2O = beta-D-fructose 6-phosphate + phosphate. It participates in carbohydrate biosynthesis; gluconeogenesis. This Cronobacter sakazakii (strain ATCC BAA-894) (Enterobacter sakazakii) protein is Fructose-1,6-bisphosphatase class 1.